The primary structure comprises 608 residues: Aspartate--tRNA(Asp/Asn) ligase (608 aa).

Glu187 provides a ligand contact to L-aspartate. An aspartate region spans residues 211 to 214 (QQFK). 2 residues coordinate L-aspartate: Arg233 and His461. 233 to 235 (RDE) contributes to the ATP binding site. Residue Glu495 participates in ATP binding. Residue Arg502 participates in L-aspartate binding. 547-550 (GLDR) serves as a coordination point for ATP.

Belongs to the class-II aminoacyl-tRNA synthetase family. Type 1 subfamily. As to quaternary structure, homodimer.

The protein localises to the cytoplasm. It carries out the reaction tRNA(Asx) + L-aspartate + ATP = L-aspartyl-tRNA(Asx) + AMP + diphosphate. Its function is as follows. Aspartyl-tRNA synthetase with relaxed tRNA specificity since it is able to aspartylate not only its cognate tRNA(Asp) but also tRNA(Asn). Reaction proceeds in two steps: L-aspartate is first activated by ATP to form Asp-AMP and then transferred to the acceptor end of tRNA(Asp/Asn). In Prosthecochloris aestuarii (strain DSM 271 / SK 413), this protein is Aspartate--tRNA(Asp/Asn) ligase.